The primary structure comprises 342 residues: MKPLEYCNGVLKLLDQTLLPGEQKIVELKNYIEVADAIKNMIVRGAPAIGVTAAYGVAIASKAINTDSKEEFFAELAKVCDIIKSTRPTAVNLFWAVDRVYSRAVSNRDKTIEEIKKLIEEEAYLMEKEDIESNRSIGRFGNELIKENWTILTHCNAGALATCDYGTALGVIRAAHESGKNIQVFADETRPYLQGARLTAWELMQDNIPVTLICDNMAGHFMKEGLIDCVIVGADRIALNGDTANKIGTYSLAVLAKENNIPFYVAAPTTTIDFSIETGEQIPIEERSPAEITHIKGIRIAPEGVKVRNPAFDVTPNKYISAIITEKGIIYPPYDENIKKYR.

Residues 44–46 (RGA), Arg87, and Gln194 contribute to the substrate site. The active-site Proton donor is the Asp235. 245 to 246 (NK) lines the substrate pocket.

Belongs to the eIF-2B alpha/beta/delta subunits family. MtnA subfamily.

The catalysed reaction is 5-(methylsulfanyl)-alpha-D-ribose 1-phosphate = 5-(methylsulfanyl)-D-ribulose 1-phosphate. It participates in amino-acid biosynthesis; L-methionine biosynthesis via salvage pathway; L-methionine from S-methyl-5-thio-alpha-D-ribose 1-phosphate: step 1/6. Functionally, catalyzes the interconversion of methylthioribose-1-phosphate (MTR-1-P) into methylthioribulose-1-phosphate (MTRu-1-P). The chain is Methylthioribose-1-phosphate isomerase from Acetivibrio thermocellus (strain ATCC 27405 / DSM 1237 / JCM 9322 / NBRC 103400 / NCIMB 10682 / NRRL B-4536 / VPI 7372) (Clostridium thermocellum).